The primary structure comprises 197 residues: ATP-dependent Clp protease proteolytic subunit (197 aa).

The active-site Nucleophile is Ser98. His123 is a catalytic residue.

Belongs to the peptidase S14 family. In terms of assembly, fourteen ClpP subunits assemble into 2 heptameric rings which stack back to back to give a disk-like structure with a central cavity, resembling the structure of eukaryotic proteasomes.

Its subcellular location is the cytoplasm. The enzyme catalyses Hydrolysis of proteins to small peptides in the presence of ATP and magnesium. alpha-casein is the usual test substrate. In the absence of ATP, only oligopeptides shorter than five residues are hydrolyzed (such as succinyl-Leu-Tyr-|-NHMec, and Leu-Tyr-Leu-|-Tyr-Trp, in which cleavage of the -Tyr-|-Leu- and -Tyr-|-Trp bonds also occurs).. Cleaves peptides in various proteins in a process that requires ATP hydrolysis. Has a chymotrypsin-like activity. Plays a major role in the degradation of misfolded proteins. The sequence is that of ATP-dependent Clp protease proteolytic subunit from Anaplasma phagocytophilum (strain HZ).